The primary structure comprises 552 residues: Low-affinity Fe(2+) transport protein (552 aa).

Topologically, residues 1–97 (MGKIAEFLGN…DFLVRVAGSQ (97 aa)) are extracellular. K39 is covalently cross-linked (Glycyl lysine isopeptide (Lys-Gly) (interchain with G-Cter in ubiquitin)). A phosphoserine mark is found at S48 and S50. Residues 98–118 (AVFFIVWIILIIWVVIGIVYN) traverse the membrane as a helical segment. The Cytoplasmic segment spans residues 119–225 (APFNWQVVMQ…SNVASRYMGS (107 aa)). The chain crosses the membrane as a helical span at residues 226 to 246 (IAAMVIFWIGIFVWIGCGAIP). The Extracellular segment spans residues 247 to 271 (KDAGNTPPYTGETTGSNPRLKKFSD). A helical transmembrane segment spans residues 272-292 (AWQMYINTAVAVSLLICTTFL). Topologically, residues 293 to 354 (QNIRARHDYF…GRKMIDWYAD (62 aa)) are cytoplasmic. Residues 355–375 (IIGTGIGVLIGVAVFATWIGI) traverse the membrane as a helical segment. Residues 376-383 (GSPMKWDD) are Extracellular-facing. A helical transmembrane segment spans residues 384–404 (NWWLIIGTYTGLIGFLDGFVL). The Cytoplasmic segment spans residues 405 to 465 (REVYFRIVQH…SQYINRICST (61 aa)). A helical membrane pass occupies residues 466–486 (PWSVLVSVIIIIGLICIASGL). Over 487–493 (RWSTTGQ) the chain is Extracellular. A helical transmembrane segment spans residues 494–514 (LIANTPTMIIEEFFLLVLLQA). Residues 515-552 (HNWADRQRRVEVTALYARRRILLSYVEKRFPEVMMLEK) lie on the Cytoplasmic side of the membrane.

This sequence belongs to the FET4 family.

It localises to the membrane. Functionally, required for Fe(2+) ion low affinity uptake. In Saccharomyces cerevisiae (strain ATCC 204508 / S288c) (Baker's yeast), this protein is Low-affinity Fe(2+) transport protein (FET4).